A 418-amino-acid polypeptide reads, in one-letter code: CinA-like protein (418 aa).

The protein belongs to the CinA family.

The chain is CinA-like protein from Cytophaga hutchinsonii (strain ATCC 33406 / DSM 1761 / CIP 103989 / NBRC 15051 / NCIMB 9469 / D465).